The following is a 1337-amino-acid chain: Protein HEG homolog 1 (1337 aa).

Residues 1 to 31 (MATPRAPRWPPPSLLLLLLLPLLLLPPAAPG) form the signal peptide. Composition is skewed to low complexity over residues 28-40 (AAPG…PSPA) and 54-66 (PGAG…PGVA). Disordered regions lie at residues 28–149 (AAPG…SNMA), 175–211 (SSLL…GFLE), 235–296 (ASHP…QNPS), 313–675 (VPRT…PSPI), 723–767 (LIPS…TVSL), and 860–909 (EGNR…PQTT). At 32–1204 (ARGSLPSPAH…GLNCGNPYQL (1173 aa)) the chain is on the extracellular side. Over residues 118–131 (TAQNARMSHSSSEG) the composition is skewed to polar residues. The segment covering 175–190 (SSLLSLESLPESPSSS) has biased composition (low complexity). Polar residues-rich tracts occupy residues 195-206 (RITPSQTESGTS), 247-258 (VLSQKRNSSGQE), 283-296 (IKNG…QNPS), and 340-361 (GITS…NSGL). Residues 470-480 (RGGGEDSGMGG) show a composition bias toward gly residues. 2 stretches are compositionally biased toward low complexity: residues 486 to 502 (SSSS…LDSS) and 556 to 575 (SYSE…DSPS). 2 stretches are compositionally biased toward polar residues: residues 576–585 (QAQPKQSSMS) and 592–617 (AQSS…NMPN). Residues 637–675 (PSTQPSPSQPQPFSSALPSTRSPGSTSETTTSSPSPSPI) are compositionally biased toward low complexity. Composition is skewed to polar residues over residues 725–742 (PSNQ…QQEK) and 751–763 (SLVS…TKAV). The span at 868–884 (PTTQPIPLTTSTTSAGE) shows a compositional bias: low complexity. The segment covering 885 to 896 (RTTELGRAEESS) has biased composition (basic and acidic residues). The span at 897–909 (PSHFLTPSSPQTT) shows a compositional bias: polar residues. One can recognise an EGF-like 1 domain in the interval 941 to 979 (PVNSCTVNPCLHDGKCIVDLTGRGYRCVCPPAWQGENCS). Disulfide bonds link Cys945–Cys956, Cys950–Cys967, Cys969–Cys978, Cys985–Cys996, Cys990–Cys1005, and Cys1007–Cys1018. Residues 981–1019 (DVNECLSSPCPPLATCNNTQGSFTCRCPVGYQLEKGICN) form the EGF-like 2; calcium-binding domain. Residue Asn1093 is glycosylated (N-linked (GlcNAc...) asparagine). A helical transmembrane segment spans residues 1205–1225 (ITVVIAAAGGGLLLILGVALI). Topologically, residues 1226 to 1337 (VTCCRKSKND…SDESRRRDYF (112 aa)) are cytoplasmic. Ser1315 is modified (phosphoserine).

Interacts with CCM2 and KRIT1; KRIT1 markedly facilitates interaction with CCM2.

The protein localises to the cell membrane. Its subcellular location is the cell junction. Its function is as follows. Receptor component of the CCM signaling pathway which is a crucial regulator of heart and vessel formation and integrity. May be acting by stabilizing endothelial cell junctions. This Mus musculus (Mouse) protein is Protein HEG homolog 1 (Heg1).